Here is a 257-residue protein sequence, read N- to C-terminus: Acyl-[acyl-carrier-protein]--UDP-N-acetylglucosamine O-acyltransferase (257 aa).

Belongs to the transferase hexapeptide repeat family. LpxA subfamily. As to quaternary structure, homotrimer.

The protein localises to the cytoplasm. It carries out the reaction a (3R)-hydroxyacyl-[ACP] + UDP-N-acetyl-alpha-D-glucosamine = a UDP-3-O-[(3R)-3-hydroxyacyl]-N-acetyl-alpha-D-glucosamine + holo-[ACP]. Its pathway is glycolipid biosynthesis; lipid IV(A) biosynthesis; lipid IV(A) from (3R)-3-hydroxytetradecanoyl-[acyl-carrier-protein] and UDP-N-acetyl-alpha-D-glucosamine: step 1/6. Functionally, involved in the biosynthesis of lipid A, a phosphorylated glycolipid that anchors the lipopolysaccharide to the outer membrane of the cell. The sequence is that of Acyl-[acyl-carrier-protein]--UDP-N-acetylglucosamine O-acyltransferase from Anaeromyxobacter sp. (strain Fw109-5).